The sequence spans 65 residues: Large ribosomal subunit protein bL35 (65 aa).

The interval 1 to 25 (MPKLKTKSSAAKRFKKTGKGGFKHR) is disordered.

This sequence belongs to the bacterial ribosomal protein bL35 family.

The polypeptide is Large ribosomal subunit protein bL35 (Francisella tularensis subsp. holarctica (strain FTNF002-00 / FTA)).